The sequence spans 2230 residues: Probable serine/threonine-protein kinase DDB_G0267686 (2230 aa).

Residues 1–12 (MEPNNNISNSNN) are compositionally biased toward low complexity. Disordered regions lie at residues 1-22 (MEPN…GDGK), 121-152 (NNNS…QLNN), 270-352 (DEKE…DKIS), 368-397 (PIIN…RLSS), 430-451 (NGAS…ILST), 464-574 (KNSS…NSPS), 593-620 (GSGS…NSST), 699-849 (QHQQ…LLPS), and 915-974 (SNQI…SSNS). The segment covering 270 to 336 (DEKENKEGGQ…NENEKNHNDK (67 aa)) has biased composition (basic and acidic residues). Positions 337–346 (NDDDDDDEDN) are enriched in acidic residues. Composition is skewed to low complexity over residues 375 to 388 (SSSN…NNSI), 430 to 447 (NGAS…GPTP), 473 to 574 (NNNN…NSPS), 593 to 602 (GSGSSSLGKG), 610 to 619 (SYSNNNNNSS), and 699 to 721 (QHQQ…QQQL). Positions 722 to 731 (KSRSNTTNTP) are enriched in polar residues. Positions 745–754 (NSPPVSPPSS) are enriched in pro residues. Composition is skewed to low complexity over residues 755-766 (PMLSPLSSSPPS) and 783-818 (TGSL…RSNS). The segment covering 840–849 (YNTTPPLLPS) has biased composition (polar residues). Residues 991–1119 (SLSALMKDRI…CILHSTTNGT (129 aa)) form the RGS domain. Disordered regions lie at residues 1146-1181 (SKET…INNN), 1220-1243 (KLSH…NQPL), 1300-1362 (LSPP…GDQT), 1506-1546 (QQQQ…QPQQ), 1563-1611 (PTIP…NNNS), 1725-1771 (VSNN…NNGN), 1802-1848 (NNLM…NNNH), and 1905-1929 (ENNT…TISQ). Low complexity-rich tracts occupy residues 1149–1181 (TSNS…INNN) and 1222–1239 (SHSN…SYTS). A compositionally biased stretch (polar residues) spans 1324–1353 (TNGSMKSSLFQQQLQPTGSINSSPINNHQV). 2 stretches are compositionally biased toward low complexity: residues 1506–1520 (QQQQ…QFQP) and 1530–1546 (PSSN…QPQQ). Residues 1726–1769 (SNNNNINSNNNNNNNNNNNNNNNNNNNNNNNNNNNNNNNSNNNN) show a composition bias toward low complexity. The span at 1905-1915 (ENNTTTTTTTT) shows a compositional bias: low complexity. The segment covering 1916–1929 (SNRPFRSNNPTISQ) has biased composition (polar residues). The Protein kinase domain occupies 1949–2208 (IVFLNKLGEG…SCPEILDSLL (260 aa)). Residues 1955–1963 (LGEGTSAKV) and Lys-1976 each bind ATP. Asp-2069 acts as the Proton acceptor in catalysis.

The protein belongs to the protein kinase superfamily. TKL Ser/Thr protein kinase family.

It carries out the reaction L-seryl-[protein] + ATP = O-phospho-L-seryl-[protein] + ADP + H(+). The catalysed reaction is L-threonyl-[protein] + ATP = O-phospho-L-threonyl-[protein] + ADP + H(+). The chain is Probable serine/threonine-protein kinase DDB_G0267686 from Dictyostelium discoideum (Social amoeba).